A 464-amino-acid chain; its full sequence is ATP-dependent protease ATPase subunit HslU (464 aa).

Residues Val18, 60–65, Asp277, Glu342, and Arg414 each bind ATP; that span reads GVGKTE.

Belongs to the ClpX chaperone family. HslU subfamily. As to quaternary structure, a double ring-shaped homohexamer of HslV is capped on each side by a ring-shaped HslU homohexamer. The assembly of the HslU/HslV complex is dependent on binding of ATP.

Its subcellular location is the cytoplasm. ATPase subunit of a proteasome-like degradation complex; this subunit has chaperone activity. The binding of ATP and its subsequent hydrolysis by HslU are essential for unfolding of protein substrates subsequently hydrolyzed by HslV. HslU recognizes the N-terminal part of its protein substrates and unfolds these before they are guided to HslV for hydrolysis. This chain is ATP-dependent protease ATPase subunit HslU, found in Lactobacillus delbrueckii subsp. bulgaricus (strain ATCC 11842 / DSM 20081 / BCRC 10696 / JCM 1002 / NBRC 13953 / NCIMB 11778 / NCTC 12712 / WDCM 00102 / Lb 14).